The following is a 940-amino-acid chain: MTTEDFPKAYNFQDTEPELYVFWEKNGMFKAEASSDKPPYSVIMPPPNVTGVLHMGHALVNTLQDVLVRYKRMSGFEVCWIPGTDHAGIATQAVVERHLQASEGKRRTDYSREDFLKHIWAWKEKSEKVVLSQLRQLGCSCDWDRKRFTMEPLANRAVKKAFKTLFENGYIYRGYYLVNWDPVLQTALADDEVEYEEKDGWLYYIRYRMVGSQESIVVATTRPETSLGDTGIAVSPNDERYASWIGASVEVPFVNRQIPIIGDASVDPTFGTGAVKVTPAHDKDDYLMGTNHHLPMINILTPSGGINENGGPFAGMAKEKAREEILIALEEQGLFVRKEPYKLRVGVSYRSGAVIEPYLSKQWFVSVSEFRGALREFVESQDIKIFPKDFVKNYLSWVNHLRDWCISRQLWWGHRIPVWYHKNDDERVLCYDGEGIPEEVAQDPDSWYQDPDVLDTWFSSGLWPLTCLGWPDENSPDLKKFYPTALLVTGHDILFFWVTRMVLLCSSMSGEKPFSEVFLHGLIFGKSYKRYNDFGEWSYISGKEKLAYDMGEALPDGVVAKWEKLSKSKGNVIDPLEMIATYGTDAVRLTLCSCANRGEQIDLDYRLFEEYKHFANKVWNGARFIFGHISDLQGKDLLAGIDEDSLGLEDFYILDGFNQLIHQLEEAYATYAFDKVATLAYEFFRNDLCSTYIEIIKPTLFGKQGNEASQSTKRTLLAVLLINVLGVLHPVAPFITESLFLRIQDTLGALPEGDGDAFTGHALRMLRSRACMEAPYPKAFDVKIPQDLRESFTLAQRLVYTIRNIRGEMQLDPRLHLKAFVVCSDTTEIQSCIPILQALGGLESIQLLDKEPEKGLYSFGVVDTIRLGIFVPEEHLLKEKGRLEKERVRLERAVENLERLLGDESFCQKANPNLVVAKQEALKNNRIELQGILDKLASFA.

Residues 47–57 carry the 'HIGH' region motif; that stretch reads PNVTGVLHMGH. The 'KMSKS' region motif lies at 564–568; sequence KLSKS. K567 contacts ATP. Positions 873–905 form a coiled coil; the sequence is EEHLLKEKGRLEKERVRLERAVENLERLLGDES.

This sequence belongs to the class-I aminoacyl-tRNA synthetase family. ValS type 1 subfamily. In terms of assembly, monomer.

It localises to the cytoplasm. The catalysed reaction is tRNA(Val) + L-valine + ATP = L-valyl-tRNA(Val) + AMP + diphosphate. Catalyzes the attachment of valine to tRNA(Val). As ValRS can inadvertently accommodate and process structurally similar amino acids such as threonine, to avoid such errors, it has a 'posttransfer' editing activity that hydrolyzes mischarged Thr-tRNA(Val) in a tRNA-dependent manner. This chain is Valine--tRNA ligase, found in Chlamydia pneumoniae (Chlamydophila pneumoniae).